Reading from the N-terminus, the 242-residue chain is uncharacterized protein (242 aa).

Positions 1–20 (MTFIKGLPLMLLTISLGCNA) are cleaved as a signal peptide.

This sequence belongs to the periplasmic pilus chaperone family.

It localises to the periplasm. In terms of biological role, could be required for the biogenesis of the putative YbgD fimbria. This is an uncharacterized protein from Escherichia coli (strain K12).